We begin with the raw amino-acid sequence, 485 residues long: Pumilio domain-containing protein 7 (485 aa).

The disordered stretch occupies residues 29–72 (NKTHKNKNPKPPVKLLPYRHGSNTTSSDSDSYIFNSGSGSSDAE). Polar residues predominate over residues 49–71 (GSNTTSSDSDSYIFNSGSGSSDA). Pumilio repeat units lie at residues 86–124 (DVLL…AVFE), 128–163 (ESTT…ELLR), 164–200 (QMID…QLIQ), 201–236 (ELST…TFFV), 237–279 (HFLS…FRIQ), 287–324 (CIVR…TIID), 326–361 (CLLR…EMME), and 370–411 (DVES…RELP). The RNA-binding stretch occupies residues 439–454 (FSSGKKIIDSVMRHGV).

RNA-binding protein that binds to the consensus sequence 5'-CUCUGUAUCUUGU-3' in mRNA 3'-UTRs and modulates mRNA expression and stability. Functions redundantly with puf-5 and puf-6 in oocyte formation and organization, early embryonic cell divisions, and repression of expression of glp-1 and other maternal mRNAs in late oogenesis. In Caenorhabditis elegans, this protein is Pumilio domain-containing protein 7.